Here is a 404-residue protein sequence, read N- to C-terminus: Triose phosphate/phosphate translocator, chloroplastic (404 aa).

The transit peptide at 1 to 74 (MESRVLSRTT…GPVCSRREKT (74 aa)) directs the protein to the chloroplast. Residues 75–98 (AVQPCRAASGSSGEAKTGFLEKYP) are Chloroplast intermembrane-facing. Residues 99–119 (ALVTGSFFFMWYFLNVIFNIL) form a helical membrane-spanning segment. The Lumenal portion of the chain corresponds to 120 to 131 (NKKIYNYFPYPY). A helical membrane pass occupies residues 132–152 (FVSVIHLFVGVVYCLASWSVG). Residues 153 to 209 (LPKRAPMDSKLLKLLIPVAVCHAIGHVTSNVSFAAVAVSFTHTIKALEPFFNAAASQ) are Chloroplast intermembrane-facing. Residues 210–230 (FVLGQSIPITLWLSLAPVVIG) traverse the membrane as a helical segment. Topologically, residues 231-274 (VSMASLTELSFNWLGFISAMISNVSFTYRSLYSKKAMTDMDSTN) are lumenal. A helical transmembrane segment spans residues 275–294 (IYAYISIIALFVCLPPAIIV). Over 295–372 (EGPQLMKHGF…IAFGNKISTQ (78 aa)) the chain is Chloroplast intermembrane. The chain crosses the membrane as a helical span at residues 373–393 (TAIGTSIAIAGVALYSLIKAK). At 394–404 (MEEEKRQMKST) the chain is on the lumenal side.

This sequence belongs to the TPT transporter family. TPT (TC 2.A.7.9) subfamily. In terms of processing, the N-terminus is blocked.

It is found in the plastid. It localises to the chloroplast membrane. Functionally, mediates the export of fixed carbons from the chloroplasts into the cytosol in the form of triose phosphates. The polypeptide is Triose phosphate/phosphate translocator, chloroplastic (Spinacia oleracea (Spinach)).